A 120-amino-acid polypeptide reads, in one-letter code: Large ribosomal subunit protein bL19 (120 aa).

This sequence belongs to the bacterial ribosomal protein bL19 family.

In terms of biological role, this protein is located at the 30S-50S ribosomal subunit interface and may play a role in the structure and function of the aminoacyl-tRNA binding site. In Gloeothece citriformis (strain PCC 7424) (Cyanothece sp. (strain PCC 7424)), this protein is Large ribosomal subunit protein bL19.